The following is a 150-amino-acid chain: Large ribosomal subunit protein uL13 (150 aa).

The protein belongs to the universal ribosomal protein uL13 family. Part of the 50S ribosomal subunit.

Its function is as follows. This protein is one of the early assembly proteins of the 50S ribosomal subunit, although it is not seen to bind rRNA by itself. It is important during the early stages of 50S assembly. This chain is Large ribosomal subunit protein uL13, found in Chlorobaculum parvum (strain DSM 263 / NCIMB 8327) (Chlorobium vibrioforme subsp. thiosulfatophilum).